A 315-amino-acid polypeptide reads, in one-letter code: tRNA dimethylallyltransferase (315 aa).

15 to 22 serves as a coordination point for ATP; the sequence is GPTACGKS. Position 17 to 22 (17 to 22) interacts with substrate; it reads TACGKS. Interaction with substrate tRNA stretches follow at residues 40-43 and 162-166; these read DSAL and QRLIR.

It belongs to the IPP transferase family. In terms of assembly, monomer. Requires Mg(2+) as cofactor.

It carries out the reaction adenosine(37) in tRNA + dimethylallyl diphosphate = N(6)-dimethylallyladenosine(37) in tRNA + diphosphate. Functionally, catalyzes the transfer of a dimethylallyl group onto the adenine at position 37 in tRNAs that read codons beginning with uridine, leading to the formation of N6-(dimethylallyl)adenosine (i(6)A). In Buchnera aphidicola subsp. Acyrthosiphon pisum (strain APS) (Acyrthosiphon pisum symbiotic bacterium), this protein is tRNA dimethylallyltransferase.